A 2076-amino-acid polypeptide reads, in one-letter code: Protein Ycf2 (2076 aa).

ATP is bound at residue 1458-1465 (GSIGTGRS).

Belongs to the Ycf2 family.

It localises to the plastid. Its subcellular location is the chloroplast stroma. Its function is as follows. Probable ATPase of unknown function. Its presence in a non-photosynthetic plant (Epifagus virginiana) and experiments in tobacco indicate that it has an essential function which is probably not related to photosynthesis. The chain is Protein Ycf2 from Acorus calamus (Sweet flag).